The chain runs to 312 residues: Ribosomal RNA small subunit methyltransferase H (312 aa).

Residues 35 to 37, Asp-55, Phe-85, Asp-101, and Gln-108 each bind S-adenosyl-L-methionine; that span reads GGH.

Belongs to the methyltransferase superfamily. RsmH family.

It localises to the cytoplasm. It catalyses the reaction cytidine(1402) in 16S rRNA + S-adenosyl-L-methionine = N(4)-methylcytidine(1402) in 16S rRNA + S-adenosyl-L-homocysteine + H(+). In terms of biological role, specifically methylates the N4 position of cytidine in position 1402 (C1402) of 16S rRNA. This chain is Ribosomal RNA small subunit methyltransferase H, found in Buchnera aphidicola subsp. Acyrthosiphon pisum (strain Tuc7).